The chain runs to 263 residues: Leukocyte-associated immunoglobulin-like receptor 1 (263 aa).

The signal sequence occupies residues 1-21 (MSLHPVILLVLVLCLGWKINT). Over 22–144 (QEGSLPDITI…TSWLKTYSIY (123 aa)) the chain is Extracellular. In terms of domain architecture, Ig-like C2-type spans 27–115 (PDITIFPNSS…TWSERSKTLE (89 aa)). 2 N-linked (GlcNAc...) asparagine glycosylation sites follow: asparagine 34 and asparagine 90. A disulfide bond links cysteine 49 and cysteine 99. The chain crosses the membrane as a helical span at residues 145 to 165 (IFTVVSVIFLLCLSALLFCFL). The Cytoplasmic segment spans residues 166-263 (RHRQKKQGLP…SSTYAAIIRH (98 aa)). 2 short sequence motifs (ITIM motif) span residues 226-231 (VTYIQL) and 255-260 (STYAAI). A phosphotyrosine mark is found at tyrosine 228 and tyrosine 257.

Interacts with SH2 domains of tyrosine-protein phosphatases PTPN6 and PTPN11. The interaction with PTPN6 is constitutive. Interacts with the SH2 domain of CSK. Binds with high affinity to extracellular matrix collagens, the interaction is functionally important. Phosphorylation at Tyr-228 and Tyr-257 activates it. May be phosphorylated by LCK. In terms of processing, N-glycosylated. Expressed in lymphoid organs and in cell lines of hemopoietic origin.

It is found in the cell membrane. Functions as an inhibitory receptor that plays a constitutive negative regulatory role on cytolytic function of natural killer (NK) cells, B-cells and T-cells. Activation by Tyr phosphorylation results in recruitment and activation of the phosphatases PTPN6 and PTPN11. It also reduces the increase of intracellular calcium evoked by B-cell receptor ligation. May also play its inhibitory role independently of SH2-containing phosphatases. Modulates cytokine production in CD4+ T-cells, down-regulating IL2 and IFNG production while inducing secretion of transforming growth factor beta. Also down-regulates IgG and IgE production in B-cells as well as IL8, IL10 and TNF secretion. Inhibits proliferation and induces apoptosis in myeloid leukemia cell lines as well as prevents nuclear translocation of NF-kappa-B p65 subunit/RELA and phosphorylation of I-kappa-B alpha/CHUK in these cells. Inhibits the differentiation of peripheral blood precursors towards dendritic cells. In Mus musculus (Mouse), this protein is Leukocyte-associated immunoglobulin-like receptor 1 (Lair1).